The sequence spans 1205 residues: Plasma membrane calcium-transporting ATPase 1 (1205 aa).

Topologically, residues 2-104 (GDMANNSVAY…KTFLQLVWEA (103 aa)) are cytoplasmic. The interval 94–111 (PKTFLQLVWEALQDVTLI) is calmodulin-binding subdomain A. The helical transmembrane segment at 105–125 (LQDVTLIILEIAAVVSLGLSF) threads the bilayer. Over 126-153 (YQPPGGNEALCGSVNVGEEEEESEAGWI) the chain is Extracellular. Residues 154 to 174 (EGAAILLSVVCVVLVTAFNDW) traverse the membrane as a helical segment. Residues 175-351 (SKEKQFRGLQ…KEKSVLQGKL (177 aa)) lie on the Cytoplasmic side of the membrane. The segment at 296 to 343 (EEEKEKEKKDKKTKAQDGAAMEMQPLKSEDGVDGDEKDKKRSNLPKKE) is disordered. 2 stretches are compositionally biased toward basic and acidic residues: residues 300–310 (EKEKKDKKTKA) and 322–343 (KSEDGVDGDEKDKKRSNLPKKE). Residues 352–371 (TKLAVQIGKAGLLMSAITVI) traverse the membrane as a helical segment. Topologically, residues 372–403 (ILVLYFVIDTSWVQKRPWLAECTPIYIQYFVK) are extracellular. The helical transmembrane segment at 404–424 (FFIIGVTVLVVAVPEGLPLAV) threads the bilayer. Topologically, residues 425-840 (TISLAYSVKK…RNVYDSISKF (416 aa)) are cytoplasmic. The active-site 4-aspartylphosphate intermediate is Asp-460. Positions 460, 462, and 782 each coordinate Mg(2+). The chain crosses the membrane as a helical span at residues 841–861 (LQFQLTVNVVAVIVAFTGACI). Residues 862–868 (TQDSPLK) lie on the Extracellular side of the membrane. A helical transmembrane segment spans residues 869-889 (AVQMLWVNLIMDTLASLALAT). Residues 890–912 (EPPTEALLLRKPYGRNKPLISRT) lie on the Cytoplasmic side of the membrane. A helical membrane pass occupies residues 913-933 (MMKNILGHAFYQLVVVFTLLF). Over 934–956 (AGEKIFDIDSGRNAPLHAPPSEH) the chain is Extracellular. The chain crosses the membrane as a helical span at residues 957–976 (YTIVFNTFVMMQLFNEINAR). At 977 to 990 (KIHGERNVFEGIFN) the chain is on the cytoplasmic side. A helical transmembrane segment spans residues 991-1012 (NAIFCTIVLGTFVVQIIIVQFG). Topologically, residues 1013-1024 (GKPFSCSKLSIE) are extracellular. Residues 1025–1045 (QWLWSVFLGMGTLLWGQLIST) traverse the membrane as a helical segment. At 1046 to 1205 (IPTSRLKFLK…SPLHSLETSL (160 aa)) the chain is on the cytoplasmic side. Thr-1101 bears the Phosphothreonine; by PKC mark. The segment at 1145–1205 (PLIDDTDAED…SPLHSLETSL (61 aa)) is disordered. Polar residues predominate over residues 1183–1205 (TDMNKSATSSSPGSPLHSLETSL).

Belongs to the cation transport ATPase (P-type) (TC 3.A.3) family. Type IIB subfamily.

The protein resides in the cell membrane. It carries out the reaction Ca(2+)(in) + ATP + H2O = Ca(2+)(out) + ADP + phosphate + H(+). Functionally, catalyzes the hydrolysis of ATP coupled with the transport of calcium from the cytoplasm to the extracellular space thereby maintaining intracellular calcium homeostasis. In Gallus gallus (Chicken), this protein is Plasma membrane calcium-transporting ATPase 1.